The chain runs to 130 residues: Small ribosomal subunit protein uS9 (130 aa).

This sequence belongs to the universal ribosomal protein uS9 family.

This is Small ribosomal subunit protein uS9 from Bordetella bronchiseptica (strain ATCC BAA-588 / NCTC 13252 / RB50) (Alcaligenes bronchisepticus).